Here is a 152-residue protein sequence, read N- to C-terminus: Nucleoside diphosphate kinase (152 aa).

6 residues coordinate ATP: K9, F57, R85, T91, R102, and N112. The Pros-phosphohistidine intermediate role is filled by H115.

The protein belongs to the NDK family. As to quaternary structure, homotetramer. The cofactor is Mg(2+).

It is found in the cytoplasm. The catalysed reaction is a 2'-deoxyribonucleoside 5'-diphosphate + ATP = a 2'-deoxyribonucleoside 5'-triphosphate + ADP. It catalyses the reaction a ribonucleoside 5'-diphosphate + ATP = a ribonucleoside 5'-triphosphate + ADP. Its function is as follows. Major role in the synthesis of nucleoside triphosphates other than ATP. The ATP gamma phosphate is transferred to the NDP beta phosphate via a ping-pong mechanism, using a phosphorylated active-site intermediate. In Rhodopirellula baltica (strain DSM 10527 / NCIMB 13988 / SH1), this protein is Nucleoside diphosphate kinase.